A 454-amino-acid polypeptide reads, in one-letter code: tRNA modification GTPase MnmE (454 aa).

3 residues coordinate (6S)-5-formyl-5,6,7,8-tetrahydrofolate: R23, E80, and K120. The 162-residue stretch at 216–377 folds into the TrmE-type G domain; that stretch reads GMKVVIAGRP…LRDHLKQSMG (162 aa). Residue N226 coordinates K(+). GTP contacts are provided by residues 226-231, 245-251, 270-273, 335-338, and 358-360; these read NAGKSS, TDIAGTT, DTAG, NKAD, and SAR. S230 provides a ligand contact to Mg(2+). The K(+) site is built by T245, I247, and T250. Mg(2+) is bound at residue T251. A (6S)-5-formyl-5,6,7,8-tetrahydrofolate-binding site is contributed by K454.

The protein belongs to the TRAFAC class TrmE-Era-EngA-EngB-Septin-like GTPase superfamily. TrmE GTPase family. In terms of assembly, homodimer. Heterotetramer of two MnmE and two MnmG subunits. The cofactor is K(+).

The protein localises to the cytoplasm. In terms of biological role, exhibits a very high intrinsic GTPase hydrolysis rate. Involved in the addition of a carboxymethylaminomethyl (cmnm) group at the wobble position (U34) of certain tRNAs, forming tRNA-cmnm(5)s(2)U34. This is tRNA modification GTPase MnmE from Yersinia pseudotuberculosis serotype O:1b (strain IP 31758).